A 122-amino-acid polypeptide reads, in one-letter code: Small ribosomal subunit protein uS13 (122 aa).

Residues 95–122 are disordered; it reads GLPVRGQRTHTNARTRKGPAKPIAGKKK.

The protein belongs to the universal ribosomal protein uS13 family. In terms of assembly, part of the 30S ribosomal subunit. Forms a loose heterodimer with protein S19. Forms two bridges to the 50S subunit in the 70S ribosome.

Located at the top of the head of the 30S subunit, it contacts several helices of the 16S rRNA. In the 70S ribosome it contacts the 23S rRNA (bridge B1a) and protein L5 of the 50S subunit (bridge B1b), connecting the 2 subunits; these bridges are implicated in subunit movement. Contacts the tRNAs in the A and P-sites. In Caulobacter vibrioides (strain ATCC 19089 / CIP 103742 / CB 15) (Caulobacter crescentus), this protein is Small ribosomal subunit protein uS13.